The following is a 519-amino-acid chain: UPF0053 protein bbp_300 (519 aa).

A run of 7 helical transmembrane segments spans residues 13-35 (LLTL…AILS), 48-70 (LIGL…WMVT), 80-102 (YFSF…FKAT), 123-145 (AGFW…DAII), 150-172 (TINN…LIAS), 185-207 (VVVL…ALGF), and 212-231 (GYLY…NQIA). CBS domains follow at residues 311 to 373 (MTPR…IIDF) and 374 to 434 (SSTT…DADE).

It belongs to the UPF0053 family.

It is found in the cell membrane. In Buchnera aphidicola subsp. Baizongia pistaciae (strain Bp), this protein is UPF0053 protein bbp_300.